We begin with the raw amino-acid sequence, 102 residues long: Methane monooxygenase component D (102 aa).

As to quaternary structure, the soluble methane monooxygenase (sMMO) consists of four components A/MMOH (composed of alpha/MmoX, beta/MmoY and gamma/MmoZ), B/MMOB (MmoB), C/MMOR (MmoC) and D/MMOD (MmoD).

This Methylosinus trichosporium protein is Methane monooxygenase component D (mmoD).